The chain runs to 75 residues: RNA-binding protein KhpA (75 aa).

Residues 29 to 75 (KVVYHLTVHPDDVGKVIGKNGRIAKAIRTVVYASKTDGNKRIYLDIM) enclose the KH domain.

Belongs to the KhpA RNA-binding protein family. As to quaternary structure, forms a complex with KhpB.

The protein resides in the cytoplasm. A probable RNA chaperone. Forms a complex with KhpB which binds to cellular RNA and controls its expression. Plays a role in peptidoglycan (PG) homeostasis and cell length regulation. The polypeptide is RNA-binding protein KhpA (Oceanobacillus iheyensis (strain DSM 14371 / CIP 107618 / JCM 11309 / KCTC 3954 / HTE831)).